A 456-amino-acid polypeptide reads, in one-letter code: GTPase Der (456 aa).

2 EngA-type G domains span residues 4-169 (PIVA…PSKE) and 178-353 (IQLA…EQHR). GTP contacts are provided by residues 10–17 (GRPNVGKS), 57–61 (DTGGL), 120–123 (NKCE), 184–191 (GRPNVGKS), 231–235 (DTAGI), and 296–299 (NKWD). Residues 354 to 439 (RRVSTSVVNE…PLKLFWRGKQ (86 aa)) enclose the KH-like domain.

This sequence belongs to the TRAFAC class TrmE-Era-EngA-EngB-Septin-like GTPase superfamily. EngA (Der) GTPase family. As to quaternary structure, associates with the 50S ribosomal subunit.

Functionally, GTPase that plays an essential role in the late steps of ribosome biogenesis. In Prochlorococcus marinus (strain MIT 9211), this protein is GTPase Der.